Reading from the N-terminus, the 598-residue chain is Proline--tRNA ligase (598 aa).

The protein belongs to the class-II aminoacyl-tRNA synthetase family. ProS type 1 subfamily. As to quaternary structure, homodimer.

The protein localises to the cytoplasm. It carries out the reaction tRNA(Pro) + L-proline + ATP = L-prolyl-tRNA(Pro) + AMP + diphosphate. Functionally, catalyzes the attachment of proline to tRNA(Pro) in a two-step reaction: proline is first activated by ATP to form Pro-AMP and then transferred to the acceptor end of tRNA(Pro). As ProRS can inadvertently accommodate and process non-cognate amino acids such as alanine and cysteine, to avoid such errors it has two additional distinct editing activities against alanine. One activity is designated as 'pretransfer' editing and involves the tRNA(Pro)-independent hydrolysis of activated Ala-AMP. The other activity is designated 'posttransfer' editing and involves deacylation of mischarged Ala-tRNA(Pro). The misacylated Cys-tRNA(Pro) is not edited by ProRS. This Rippkaea orientalis (strain PCC 8801 / RF-1) (Cyanothece sp. (strain PCC 8801)) protein is Proline--tRNA ligase.